A 465-amino-acid polypeptide reads, in one-letter code: Ribosomal oxygenase 2 (465 aa).

The region spanning 139-271 (QPQRFKDELW…NSWGDYLLDS (133 aa)) is the JmjC domain. Positions 179, 181, and 240 each coordinate Fe cation. Ser-309 carries the post-translational modification Phosphoserine.

Belongs to the ROX family. MINA53 subfamily. It depends on Fe(2+) as a cofactor.

It localises to the nucleus. It is found in the nucleolus. It carries out the reaction L-histidyl-[ribosomal protein uL15] + 2-oxoglutarate + O2 = (3S)-3-hydroxy-L-histidyl-[ribosomal protein uL15] + succinate + CO2. The catalysed reaction is L-histidyl-[protein] + 2-oxoglutarate + O2 = (3S)-3-hydroxy-L-histidyl-[protein] + succinate + CO2. Oxygenase that can act as both a histone lysine demethylase and a ribosomal histidine hydroxylase. Is involved in the demethylation of trimethylated 'Lys-9' on histone H3 (H3K9me3), leading to an increase in ribosomal RNA expression. Also catalyzes the hydroxylation of 60S ribosomal protein L27a on 'His-39'. May play an important role in cell growth and survival. May be involved in ribosome biogenesis, most likely during the assembly process of pre-ribosomal particles. This chain is Ribosomal oxygenase 2, found in Rattus norvegicus (Rat).